The chain runs to 417 residues: Diphosphomevalonate decarboxylase 1 (417 aa).

22-25 (YWGK) is a (R)-5-diphosphomevalonate binding site. The Peroxisomal targeting signal PTS2 motif lies at 39–47 (RVSLDPDHL). Residues Arg-77, 160-165 (SGSACR), and Thr-216 each bind (R)-5-diphosphomevalonate.

Belongs to the diphosphomevalonate decarboxylase family. As to quaternary structure, homodimer.

Its subcellular location is the peroxisome. It catalyses the reaction (R)-5-diphosphomevalonate + ATP = isopentenyl diphosphate + ADP + phosphate + CO2. The protein operates within isoprenoid biosynthesis; isopentenyl diphosphate biosynthesis via mevalonate pathway; isopentenyl diphosphate from (R)-mevalonate: step 3/3. Functionally, performs the first committed step in the biosynthesis of isoprene-containing compounds such as sterols and terpenoids. Component of the triterpene saponins (e.g. ginsenosides or panaxosides) and phytosterols biosynthetic pathways. Catalyzes the conversion of mevalonate diphosphate to isopentenyl diphosphate (IPP). This is Diphosphomevalonate decarboxylase 1 from Panax ginseng (Korean ginseng).